The following is a 571-amino-acid chain: Glutamine--tRNA ligase (571 aa).

Positions 35–45 (PEPNGYLHIGH) match the 'HIGH' region motif. ATP-binding positions include 36 to 38 (EPN) and 42 to 48 (HIGHAKS). L-glutamine is bound by residues aspartate 68 and tyrosine 213. Residues threonine 232, 262–263 (RL), and 270–272 (LSK) contribute to the ATP site. Residues 269–273 (ILSKR) carry the 'KMSKS' region motif.

The protein belongs to the class-I aminoacyl-tRNA synthetase family. Monomer.

It localises to the cytoplasm. The catalysed reaction is tRNA(Gln) + L-glutamine + ATP = L-glutaminyl-tRNA(Gln) + AMP + diphosphate. This chain is Glutamine--tRNA ligase, found in Buchnera aphidicola subsp. Acyrthosiphon pisum (strain 5A).